The sequence spans 1252 residues: DNA-directed RNA polymerase subunit beta (1252 aa).

It belongs to the RNA polymerase beta chain family. In terms of assembly, the RNAP catalytic core consists of 2 alpha, 1 beta, 1 beta' and 1 omega subunit. When a sigma factor is associated with the core the holoenzyme is formed, which can initiate transcription.

It catalyses the reaction RNA(n) + a ribonucleoside 5'-triphosphate = RNA(n+1) + diphosphate. Functionally, DNA-dependent RNA polymerase catalyzes the transcription of DNA into RNA using the four ribonucleoside triphosphates as substrates. The protein is DNA-directed RNA polymerase subunit beta of Chlamydia muridarum (strain MoPn / Nigg).